A 1039-amino-acid chain; its full sequence is Integrin alpha-IIb (1039 aa).

A signal peptide spans 1 to 31 (MARALCPLQALWLLEWVLLLLGPCAAPPAWA). Topologically, residues 32-993 (LNLDPVQLTF…TQLLRALEER (962 aa)) are extracellular. FG-GAP repeat units lie at residues 35 to 96 (DPVQ…GGQC), 110 to 173 (VGSQ…RRAE), 187 to 238 (VEND…FSSY), 251 to 305 (SLSF…DSYY), 306 to 371 (QRLH…PHAL), 373 to 432 (APSL…GLRS), and 435 to 496 (SQVL…VQDS). A glycan (N-linked (GlcNAc...) asparagine) is linked at N46. Intrachain disulfides connect C87/C96, C138/C161, and C177/C198. Residues E274, D276, and D278 each coordinate Ca(2+). N-linked (GlcNAc...) asparagine glycosylation is present at N280. Ca(2+)-binding residues include T281, E283, D328, N330, D332, R334, D336, D396, D398, D400, Y402, D404, D457, D459, N461, Y463, and D465. Disulfide bonds link C504/C515 and C521/C576. N601 carries N-linked (GlcNAc...) asparagine glycosylation. 4 disulfide bridges follow: C633–C639, C705–C718, C857–C921, and C911–C916. Residue N711 is glycosylated (N-linked (GlcNAc...) asparagine). I874 carries an O-linked (GalNAc...) serine; in variant S-874 glycan. Residue S878 is glycosylated (O-linked (GalNAc...) serine). Residue Q891 is modified to Pyrrolidone carboxylic acid; in light chain form 1. N962 is a glycosylation site (N-linked (GlcNAc...) asparagine). The helical transmembrane segment at 994–1019 (AIPIWWVLVGVLGGLLLLTILVLAMW) threads the bilayer. The Cytoplasmic segment spans residues 1020-1039 (KVGFFKRNRPPLEEDDEEGE). Residues 1022–1026 (GFFKR) carry the GFFKR motif motif.

It belongs to the integrin alpha chain family. In terms of assembly, heterodimer of an alpha and a beta subunit. The alpha subunit is composed of a heavy and a light chain linked by a disulfide bond. Alpha-IIb associates with beta-3. Directly interacts with RNF181. Interacts (via C-terminus cytoplasmic tail region) with CIB1; the interaction is direct and calcium-dependent. Interacts (via C-terminus cytoplasmic tail region) with CIB2, CIB3 and CIB4; the interactions are stabilized/increased in a calcium and magnesium-dependent manner. ITGA2B:ITGB3 interacts with PPIA/CYPA; the interaction is ROS and PPIase activity-dependent and is increased in the presence of thrombin. ITGA2B:ITGB3 interacts with SELP (via C-type lectin domain); the interaction mediates cell-cell interaction and adhesion. In terms of processing, cleaved by ELANE; the cleavage promotes activation of platelet fibrinogen receptor integrin alpha-IIb/beta-3. In terms of tissue distribution, isoform 1 and isoform 2 are expressed in platelets and megakaryocytes, but not in reticulocytes. Not detected in Jurkat, nor in U937 cell lines. Isoform 3 is expressed in prostate adenocarcinoma, as well as in several erythroleukemia, prostate adenocarcinoma and melanoma cell lines, including PC-3, DU-145, HEL, WM983A, WM983B and WM35. Not detected in platelets, nor in normal prostate (at protein level).

Its subcellular location is the membrane. Functionally, integrin alpha-IIb/beta-3 is a receptor for fibronectin, fibrinogen, plasminogen, prothrombin, thrombospondin and vitronectin. It recognizes the sequence R-G-D in a wide array of ligands. It recognizes the sequence H-H-L-G-G-G-A-K-Q-A-G-D-V in fibrinogen gamma chain. Following activation integrin alpha-IIb/beta-3 brings about platelet/platelet interaction through binding of soluble fibrinogen. This step leads to rapid platelet aggregation which physically plugs ruptured endothelial cell surface. In Homo sapiens (Human), this protein is Integrin alpha-IIb (ITGA2B).